A 425-amino-acid chain; its full sequence is G protein-activated inward rectifier potassium channel 2 (425 aa).

At 1 to 91 (MTMAKLTESM…ILTTLVDLKW (91 aa)) the chain is on the cytoplasmic side. Serine 18 and serine 25 each carry phosphoserine. A helical membrane pass occupies residues 92–116 (RFNLLIFVMVYTVTWLFFGMIWWLI). At 117–140 (AYIRGDMDHVEDPSWTPCVTNLNG) the chain is on the extracellular side. The helical; Pore-forming intramembrane region spans 141–152 (FVSAFLFSIETE). Residues 153–159 (TTIGYGY) constitute an intramembrane region (pore-forming). The Selectivity filter signature appears at 154–159 (TIGYGY). Over 160-168 (RVITDKCPE) the chain is Extracellular. The chain crosses the membrane as a helical span at residues 169-190 (GIILLLIQSVLGSIVNAFMVGC). Over 191–425 (MFVKISQPKK…VANLENESKV (235 aa)) the chain is Cytoplasmic. A disordered region spans residues 392-425 (NQHAELETEEEEKNPEEQTERNGDVANLENESKV). The PDZ-binding motif lies at 422–425 (ESKV).

This sequence belongs to the inward rectifier-type potassium channel (TC 1.A.2.1) family. KCNJ6 subfamily. In terms of assembly, associates with KCNJ3/GIRK1 or KCNJ5/GRIK4 to form a G-protein-activated heteromultimer pore-forming unit. The resulting inward current is much larger. Interacts (via PDZ-binding motif) with SNX27 (via PDZ domain); the interaction is required when endocytosed to prevent degradation in lysosomes and promote recycling to the plasma membrane. Expressed in insulin-secreting cells and brain.

It is found in the membrane. It carries out the reaction K(+)(in) = K(+)(out). Activated by phosphatidylinositol 4,5 biphosphate (PtdIns(4,5)P2). Its function is as follows. Inward rectifier potassium channels are characterized by a greater tendency to allow potassium to flow into the cell rather than out of it. Their voltage dependence is regulated by the concentration of extracellular potassium; as external potassium is raised, the voltage range of the channel opening shifts to more positive voltages. The inward rectification is mainly due to the blockage of outward current by internal magnesium. This potassium channel may be involved in the regulation of insulin secretion by glucose and/or neurotransmitters acting through G-protein-coupled receptors. The protein is G protein-activated inward rectifier potassium channel 2 (KCNJ6) of Mesocricetus auratus (Golden hamster).